A 706-amino-acid polypeptide reads, in one-letter code: MADLLIELFSEEIPARMQAKAEADLLAALTGKLKEAGLAWKTAFAVSGPRRLTAVVEGLDARSADVREEKKGPKVGAPEQAIAGFLRGAGLTDISEASVVSDPKKGDFYVAYSTVPGRDAKDVIAEAVPAIIRDFHWPKSMRWGTGELRWVRPLQRIVCVLDGAVVPFEVGGITSGNETEGHRVHGRGPYTVTGWADYKSQLEGQGHVVLSRDDRRAAILGGIEKACAKAGLQWIEDKGLLEEVTGLAEWPVVVLGQMDPDFLDLPPEVITLSMRTHQKYFAATHAKTGKLAPNFILVANIAATDGGAKIAEGNARVLSARLSDARFFWEKDKATPLEVMGEKLKTIAFKEELGSLGDKVERVAALARELAPAVGADPGLAERAARLAKADLVSEMVGEFPELQGVMGRYYALAVGEDARVADAIRDHYKPQGPSDSVPTDPVSIAVALADKLDTLVGFWAIDEKPTGSKDPFALRRAALGVVRINLENGVRLKLSNAILKAPLAVRPVVKGGQSDSVRSAASKAIDALIDPTLLSFFADRLKQVLRDQGKRHDLIDAVFALGEDDLVLIVKRVEALAAFLATEDGATLLAGYRRAANILKAEEKKGALPDGLSVDPALIAKGPAAEQALWASLNETTAALEAPLKTEDFAGAMTALAGLRAPVDAFFEDVLVNDSDAKVRENRLALLIAVRGALHKVADFSRIEG.

It belongs to the class-II aminoacyl-tRNA synthetase family. In terms of assembly, tetramer of two alpha and two beta subunits.

The protein resides in the cytoplasm. It carries out the reaction tRNA(Gly) + glycine + ATP = glycyl-tRNA(Gly) + AMP + diphosphate. This chain is Glycine--tRNA ligase beta subunit, found in Hyphomonas neptunium (strain ATCC 15444).